The chain runs to 88 residues: Small ribosomal subunit protein uS15 (88 aa).

The protein belongs to the universal ribosomal protein uS15 family. In terms of assembly, part of the 30S ribosomal subunit. Forms a bridge to the 50S subunit in the 70S ribosome, contacting the 23S rRNA.

Functionally, one of the primary rRNA binding proteins, it binds directly to 16S rRNA where it helps nucleate assembly of the platform of the 30S subunit by binding and bridging several RNA helices of the 16S rRNA. Forms an intersubunit bridge (bridge B4) with the 23S rRNA of the 50S subunit in the ribosome. The sequence is that of Small ribosomal subunit protein uS15 from Caldanaerobacter subterraneus subsp. tengcongensis (strain DSM 15242 / JCM 11007 / NBRC 100824 / MB4) (Thermoanaerobacter tengcongensis).